Here is a 148-residue protein sequence, read N- to C-terminus: Cell division protein SepF (148 aa).

Positions 1 to 59 (MNNKFKDFFGFGDNDSYEERDAYEEHYDEQEEMQNSNRPTNSRDSNVVSIKAGQAGSGP) are disordered. Residues 33–48 (MQNSNRPTNSRDSNVV) show a composition bias toward polar residues.

This sequence belongs to the SepF family. As to quaternary structure, homodimer. Interacts with FtsZ.

Its subcellular location is the cytoplasm. Its function is as follows. Cell division protein that is part of the divisome complex and is recruited early to the Z-ring. Probably stimulates Z-ring formation, perhaps through the cross-linking of FtsZ protofilaments. Its function overlaps with FtsA. In Lactobacillus delbrueckii subsp. bulgaricus (strain ATCC BAA-365 / Lb-18), this protein is Cell division protein SepF.